Reading from the N-terminus, the 135-residue chain is MQARAIQKNIHVSPRKAKLVCDLIRNKPVTNALSILENTNKKTAVFLKKLLHQAIANATNNHAMQADKLYVYHVVANQGSTLKRTSPRAKGSADLIRKRHTHLEIVLSDDVNERNKEIQAIKDRIKKRAANNKGY.

It belongs to the universal ribosomal protein uL22 family. Part of the 50S ribosomal subunit.

This protein binds specifically to 23S rRNA; its binding is stimulated by other ribosomal proteins, e.g. L4, L17, and L20. It is important during the early stages of 50S assembly. It makes multiple contacts with different domains of the 23S rRNA in the assembled 50S subunit and ribosome. Its function is as follows. The globular domain of the protein is located near the polypeptide exit tunnel on the outside of the subunit, while an extended beta-hairpin is found that lines the wall of the exit tunnel in the center of the 70S ribosome. This is Large ribosomal subunit protein uL22 from Malacoplasma penetrans (strain HF-2) (Mycoplasma penetrans).